Consider the following 276-residue polypeptide: L-aminoadipate-semialdehyde dehydrogenase-phosphopantetheinyl transferase (276 aa).

The protein belongs to the P-Pant transferase superfamily. AcpS family.

The catalysed reaction is apo-[ACP] + CoA = holo-[ACP] + adenosine 3',5'-bisphosphate + H(+). Functionally, catalyzes the transfer of a 4'-phosphopantetheine moiety from coenzyme A to a serine residue of acceptor proteins, such as alpha-aminoadipate reductase. Necessary for alpha-aminoadipate reductase activity. This is L-aminoadipate-semialdehyde dehydrogenase-phosphopantetheinyl transferase (LYS5) from Eremothecium gossypii (strain ATCC 10895 / CBS 109.51 / FGSC 9923 / NRRL Y-1056) (Yeast).